A 901-amino-acid chain; its full sequence is Alanine--tRNA ligase (901 aa).

Histidine 581, histidine 585, cysteine 684, and histidine 688 together coordinate Zn(2+).

Belongs to the class-II aminoacyl-tRNA synthetase family. The cofactor is Zn(2+).

It localises to the cytoplasm. It carries out the reaction tRNA(Ala) + L-alanine + ATP = L-alanyl-tRNA(Ala) + AMP + diphosphate. Catalyzes the attachment of alanine to tRNA(Ala) in a two-step reaction: alanine is first activated by ATP to form Ala-AMP and then transferred to the acceptor end of tRNA(Ala). Also edits incorrectly charged Ser-tRNA(Ala) and Gly-tRNA(Ala) via its editing domain. The sequence is that of Alanine--tRNA ligase from Mycobacterium ulcerans (strain Agy99).